A 156-amino-acid polypeptide reads, in one-letter code: Rhombotin-1 (156 aa).

LIM zinc-binding domains are found at residues 22 to 84 and 86 to 148; these read KGCA…LFGT and GNCA…GQLN.

As to expression, expressed in the brain and not in the thymus.

It is found in the nucleus. In terms of biological role, may be involved in gene regulation within neural lineage cells potentially by direct DNA binding or by binding to other transcription factors. The protein is Rhombotin-1 (LMO1) of Bos taurus (Bovine).